The primary structure comprises 301 residues: RNA polymerase II holoenzyme cyclin-like subunit (301 aa).

One can recognise a Cyclin N-terminal domain in the interval 53–142 (QQLIKLGKRM…LGECEFALIS (90 aa)).

The protein belongs to the cyclin family. Cyclin C subfamily. Component of the srb8-11 complex, a regulatory module of the Mediator complex.

The protein resides in the nucleus. Its function is as follows. Component of the srb8-11 complex. The srb8-11 complex is a regulatory module of the Mediator complex which is itself involved in regulation of basal and activated RNA polymerase II-dependent transcription. The srb8-11 complex may be involved in the transcriptional repression of a subset of genes regulated by Mediator. It may inhibit the association of the Mediator complex with RNA polymerase II to form the holoenzyme complex. The srb8-11 complex phosphorylates the C-terminal domain (CTD) of the largest subunit of RNA polymerase II. In Aspergillus oryzae (strain ATCC 42149 / RIB 40) (Yellow koji mold), this protein is RNA polymerase II holoenzyme cyclin-like subunit (ssn8).